The primary structure comprises 222 residues: Sugar fermentation stimulation protein homolog (222 aa).

The protein belongs to the SfsA family.

This is Sugar fermentation stimulation protein homolog from Thermotoga maritima (strain ATCC 43589 / DSM 3109 / JCM 10099 / NBRC 100826 / MSB8).